Reading from the N-terminus, the 142-residue chain is Large ribosomal subunit protein uL11 (142 aa).

It belongs to the universal ribosomal protein uL11 family. Part of the ribosomal stalk of the 50S ribosomal subunit. Interacts with L10 and the large rRNA to form the base of the stalk. L10 forms an elongated spine to which L12 dimers bind in a sequential fashion forming a multimeric L10(L12)X complex. In terms of processing, one or more lysine residues are methylated.

Its function is as follows. Forms part of the ribosomal stalk which helps the ribosome interact with GTP-bound translation factors. This is Large ribosomal subunit protein uL11 from Proteus mirabilis (strain HI4320).